Here is a 596-residue protein sequence, read N- to C-terminus: Elongation factor 4 (596 aa).

The region spanning 2–184 (KHIRNFSIIA…VIVAQIPPPE (183 aa)) is the tr-type G domain. GTP is bound by residues 14 to 19 (DHGKST) and 131 to 134 (NKID).

The protein belongs to the TRAFAC class translation factor GTPase superfamily. Classic translation factor GTPase family. LepA subfamily.

The protein localises to the cell inner membrane. The catalysed reaction is GTP + H2O = GDP + phosphate + H(+). Functionally, required for accurate and efficient protein synthesis under certain stress conditions. May act as a fidelity factor of the translation reaction, by catalyzing a one-codon backward translocation of tRNAs on improperly translocated ribosomes. Back-translocation proceeds from a post-translocation (POST) complex to a pre-translocation (PRE) complex, thus giving elongation factor G a second chance to translocate the tRNAs correctly. Binds to ribosomes in a GTP-dependent manner. The sequence is that of Elongation factor 4 from Shewanella woodyi (strain ATCC 51908 / MS32).